The chain runs to 184 residues: Lactoylglutathione lyase (184 aa).

Ala2 is subject to N-acetylalanine. Cys19 and Cys20 form a disulfide bridge. Residues 31–177 (LLQQTMLRVK…DGYWIEILNP (147 aa)) enclose the VOC domain. Gln34 and Arg38 together coordinate substrate. Gln34 contributes to the Zn(2+) binding site. Residues Cys61 and Cys139 are joined by a disulfide bond. N6-succinyllysine is present on Lys88. Glu100 lines the Zn(2+) pocket. Asn104 lines the substrate pocket. Thr107 is subject to Phosphothreonine. 2 residues coordinate substrate: Arg123 and His127. His127 contacts Zn(2+). At Cys139 the chain carries S-glutathionyl cysteine; alternate. Lys148 bears the N6-acetyllysine; alternate mark. Lys148 carries the post-translational modification N6-succinyllysine; alternate. 157–158 (KM) is a binding site for substrate. A Zn(2+)-binding site is contributed by Glu173. The Proton donor/acceptor role is filled by Glu173.

This sequence belongs to the glyoxalase I family. In terms of assembly, homodimer. It depends on Zn(2+) as a cofactor. In terms of processing, glutathionylation at Cys-139 inhibits enzyme activity. Post-translationally, phosphorylated at Thr-107 in the presence of CaMK2. However, this is a consensus site for phosphorylation by CK2 so phosphorylation may be mediated by CK2 rather than CaMK2. Phosphorylation is induced by TNF and suppresses the TNF-induced transcriptional activity of NF-kappa-B. Exists in a nitric oxide (NO)-modified form. The exact nature of the modification is unknown, but it suppresses the TNF-induced transcriptional activity of NF-kappa-B.

It catalyses the reaction (R)-S-lactoylglutathione = methylglyoxal + glutathione. The protein operates within secondary metabolite metabolism; methylglyoxal degradation; (R)-lactate from methylglyoxal: step 1/2. With respect to regulation, regulated by oxidation of Cys-139 in response to the redox state of the cell. Results in the alternative formation of cystine or glutathione-bound cysteine, the latter modification leading to reduced enzyme activity. In terms of biological role, catalyzes the conversion of hemimercaptal, formed from methylglyoxal and glutathione, to S-lactoylglutathione. Involved in the regulation of TNF-induced transcriptional activity of NF-kappa-B. Required for normal osteoclastogenesis. The sequence is that of Lactoylglutathione lyase (GLO1) from Homo sapiens (Human).